The sequence spans 132 residues: Small ribosomal subunit protein uS11 (132 aa).

Positions 1–24 (MAAQKQAARKPRRRDRKSVPVGQA) are disordered. Basic residues predominate over residues 7–16 (AARKPRRRDR).

This sequence belongs to the universal ribosomal protein uS11 family. As to quaternary structure, part of the 30S ribosomal subunit. Interacts with proteins S7 and S18. Binds to IF-3.

Its function is as follows. Located on the platform of the 30S subunit, it bridges several disparate RNA helices of the 16S rRNA. Forms part of the Shine-Dalgarno cleft in the 70S ribosome. The polypeptide is Small ribosomal subunit protein uS11 (Bifidobacterium adolescentis (strain ATCC 15703 / DSM 20083 / NCTC 11814 / E194a)).